The chain runs to 96 residues: Guanyl-specific ribonuclease Sa (96 aa).

Cysteines 7 and 96 form a disulfide. The active-site Proton acceptor is the E54. Catalysis depends on H85, which acts as the Proton donor.

Belongs to the ribonuclease N1/T1 family.

It is found in the secreted. It carries out the reaction [RNA] containing guanosine + H2O = an [RNA fragment]-3'-guanosine-3'-phosphate + a 5'-hydroxy-ribonucleotide-3'-[RNA fragment].. This chain is Guanyl-specific ribonuclease Sa (rnaSA), found in Kitasatospora aureofaciens (Streptomyces aureofaciens).